The sequence spans 167 residues: Phosphopantetheine adenylyltransferase (167 aa).

T9 lines the substrate pocket. ATP-binding positions include T9–F10 and H17. The substrate site is built by K41, L73, and R87. ATP contacts are provided by residues G88 to R90, E98, and N123 to T129.

The protein belongs to the bacterial CoaD family. In terms of assembly, homohexamer. Requires Mg(2+) as cofactor.

It is found in the cytoplasm. The enzyme catalyses (R)-4'-phosphopantetheine + ATP + H(+) = 3'-dephospho-CoA + diphosphate. Its pathway is cofactor biosynthesis; coenzyme A biosynthesis; CoA from (R)-pantothenate: step 4/5. Its function is as follows. Reversibly transfers an adenylyl group from ATP to 4'-phosphopantetheine, yielding dephospho-CoA (dPCoA) and pyrophosphate. The chain is Phosphopantetheine adenylyltransferase from Chromohalobacter salexigens (strain ATCC BAA-138 / DSM 3043 / CIP 106854 / NCIMB 13768 / 1H11).